Here is a 485-residue protein sequence, read N- to C-terminus: Endo-1,4-beta-xylanase C (485 aa).

An N-terminal signal peptide occupies residues 1-19; sequence MKFLQIIPVLLSLTSTTLA. Residues 34-234 form the GH11 domain; it reads KETGNKVGTI…GNGGVSGTAD (201 aa). N-linked (GlcNAc...) asparagine glycans are attached at residues Asn-56 and Asn-107. Catalysis depends on Glu-128, which acts as the Nucleophile. A glycan (N-linked (GlcNAc...) asparagine) is linked at Asn-175. Glu-221 (proton donor) is an active-site residue. The disordered stretch occupies residues 250 to 450; that stretch reads ASPAPAGGAP…PQNASDGGNC (201 aa). 2 stretches are compositionally biased toward low complexity: residues 265–330 and 344–354; these read AGND…QGQH and GSDFNNWSQGG. 7 repeat units span residues 275 to 280, 281 to 286, 287 to 292, 293 to 298, 299 to 304, 310 to 315, and 316 to 321. The 7 X 6 AA tandem repeats of G-Q-Q-P-P-Q stretch occupies residues 275-321; that stretch reads GQQPPQGQQPPQGQQPPQGQQPPQGQQPPQGNDQQGQQPPQGQQPPQ. A glycan (N-linked (GlcNAc...) asparagine) is linked at Asn-349. 8 repeat units span residues 353-361, 362-370, 371-379, 380-388, 389-397, 399-407, 408-416, and 417-425. Positions 353 to 425 are 8 X 9 AA tandem repeats of G-G-[SN]-P-W-G-G-N-Q; sequence GGSPWGGNQG…QGGNPWGGNQ (73 aa). The span at 355 to 425 shows a compositional bias: gly residues; the sequence is SPWGGNQGGS…QGGNPWGGNQ (71 aa). The segment covering 426-445 has biased composition (low complexity); that stretch reads WGAPQNAAAPQSAAAPQNAS. Asn-443 is a glycosylation site (N-linked (GlcNAc...) asparagine). The 36-residue stretch at 449 to 484 folds into the CBM1 domain; the sequence is NCASLWGQCGGQGYNGPSCCSEGSCKPINEYFHQCQ.

The protein belongs to the glycosyl hydrolase 11 (cellulase G) family.

It localises to the secreted. It catalyses the reaction Endohydrolysis of (1-&gt;4)-beta-D-xylosidic linkages in xylans.. It functions in the pathway glycan degradation; xylan degradation. Its function is as follows. Endo-1,4-beta-xylanase involved in the hydrolysis of xylan, a major structural heterogeneous polysaccharide found in plant biomass representing the second most abundant polysaccharide in the biosphere, after cellulose. This is Endo-1,4-beta-xylanase C (xynC) from Neocallimastix patriciarum (Rumen fungus).